We begin with the raw amino-acid sequence, 81 residues long: CLAVATA3/ESR (CLE)-related protein 5 (81 aa).

The signal sequence occupies residues 1-26 (MATLILKQTLIILLIIFSLQTLSSQA). Hydroxyproline occurs at positions 73 and 76. O-linked (Ara...) hydroxyproline glycosylation occurs at Pro76.

Belongs to the CLV3/ESR signal peptide family. In terms of processing, the O-glycosylation (arabinosylation) of the hydroxyproline Pro-76 enhances binding affinity of the CLE5p peptide for its receptor. As to expression, mostly expressed in roots, and, to a lower extent, in seedlings, stems, apex, flowers and siliques.

Its subcellular location is the secreted. The protein resides in the extracellular space. Its function is as follows. Extracellular signal peptide that regulates cell fate. The polypeptide is CLAVATA3/ESR (CLE)-related protein 5 (Arabidopsis thaliana (Mouse-ear cress)).